Reading from the N-terminus, the 773-residue chain is Serine/threonine-protein kinase CBK1 (773 aa).

Polar residues-rich tracts occupy residues 50–59 (LHDQYSSHME) and 178–217 (GNYN…SPQR). Disordered stretches follow at residues 50–111 (LHDQ…GGNI) and 177–275 (NGNY…QQQQ). Composition is skewed to low complexity over residues 218–256 (QPAQ…QQQP) and 265–275 (QQTQLQQQQQQ). The region spanning 370-686 (FHTVQVIGKG…ADEIKSHPFF (317 aa)) is the Protein kinase domain. Residues 376–384 (IGKGAFGEV) and Lys-399 each bind ATP. Asp-493 (proton acceptor) is an active-site residue. Residues 687-771 (RGVDWNTIRQ…SRFDYLTRKN (85 aa)) form the AGC-kinase C-terminal domain.

Belongs to the protein kinase superfamily. STE Ser/Thr protein kinase family. COT1 subfamily.

The enzyme catalyses L-seryl-[protein] + ATP = O-phospho-L-seryl-[protein] + ADP + H(+). It carries out the reaction L-threonyl-[protein] + ATP = O-phospho-L-threonyl-[protein] + ADP + H(+). Protein kinase that seems to play a role in the regulation of cell morphogenesis and proliferation. The protein is Serine/threonine-protein kinase CBK1 (CBK1) of Candida glabrata (strain ATCC 2001 / BCRC 20586 / JCM 3761 / NBRC 0622 / NRRL Y-65 / CBS 138) (Yeast).